A 231-amino-acid chain; its full sequence is Probable transglycosylase SceD (231 aa).

The signal sequence occupies residues 1–27; that stretch reads MKKTLLASSLAVGLGIVAGNAGHEAHA. The segment covering 103-116 has biased composition (polar residues); it reads APSAVQANQVQSQE. A disordered region spans residues 103–153; sequence APSAVQANQVQSQEVEAPQNAQTQQPQASTSNNSQVTATPTESKSSEGSSV. Positions 119-137 are enriched in low complexity; the sequence is APQNAQTQQPQASTSNNSQ. The segment covering 138–153 has biased composition (polar residues); sequence VTATPTESKSSEGSSV.

Belongs to the transglycosylase family. SceD subfamily.

Its subcellular location is the secreted. Its function is as follows. Is able to cleave peptidoglycan and affects clumping and separation of bacterial cells. This is Probable transglycosylase SceD (sceD) from Staphylococcus aureus (strain COL).